The following is a 106-amino-acid chain: Small ribosomal subunit protein uS17 (106 aa).

This sequence belongs to the universal ribosomal protein uS17 family. As to quaternary structure, part of the 30S ribosomal subunit.

One of the primary rRNA binding proteins, it binds specifically to the 5'-end of 16S ribosomal RNA. In Picrophilus torridus (strain ATCC 700027 / DSM 9790 / JCM 10055 / NBRC 100828 / KAW 2/3), this protein is Small ribosomal subunit protein uS17.